Here is a 171-residue protein sequence, read N- to C-terminus: Envelope glycoprotein N (171 aa).

Residues 1–132 (MARINSNSGT…CSALKYRIYV (132 aa)) are Virion surface-facing. Residues 133-153 (SSFVSVLNIILYVLLFLASVV) traverse the membrane as a helical segment. Residues 154–171 (YIRYLCHQSITTETVKDY) lie on the Intravirion side of the membrane.

Belongs to the herpesviridae glycoprotein N family. As to quaternary structure, interacts (via N-terminus) with gM (via N-terminus). The gM-gN heterodimer forms the gCII complex.

The protein localises to the virion membrane. It is found in the host membrane. Its subcellular location is the host Golgi apparatus. The protein resides in the host trans-Golgi network. In terms of biological role, envelope glycoprotein necessary for proper maturation of gM and modulation of its membrane fusion activity. Also plays a critical role in virion morphogenesis. In Elephas maximus (Indian elephant), this protein is Envelope glycoprotein N.